Reading from the N-terminus, the 228-residue chain is NOI-like protein (228 aa).

Basic and acidic residues predominate over residues 56 to 75; that stretch reads AQDHQHSEKHHNDTSTDYHV. Disordered regions lie at residues 56-87 and 99-133; these read AQDH…HRRE and RPHR…RNSD. Residues 76-86 are compositionally biased toward basic residues; sequence VKQHRRKHHRR. Residues 118 to 133 are compositionally biased toward polar residues; the sequence is HGTSATMSSSVKRNSD.

It belongs to the RIN4 family.

This is NOI-like protein from Elaeis oleifera (American oil palm).